A 101-amino-acid chain; its full sequence is NADH-quinone oxidoreductase subunit K (101 aa).

The next 3 membrane-spanning stretches (helical) occupy residues 4-24 (LSHF…GIFL), 30-50 (IVLL…FIAF), and 61-81 (VFVF…LAIL).

Belongs to the complex I subunit 4L family. As to quaternary structure, NDH-1 is composed of 14 different subunits. Subunits NuoA, H, J, K, L, M, N constitute the membrane sector of the complex.

The protein resides in the cell inner membrane. The catalysed reaction is a quinone + NADH + 5 H(+)(in) = a quinol + NAD(+) + 4 H(+)(out). Functionally, NDH-1 shuttles electrons from NADH, via FMN and iron-sulfur (Fe-S) centers, to quinones in the respiratory chain. The immediate electron acceptor for the enzyme in this species is believed to be ubiquinone. Couples the redox reaction to proton translocation (for every two electrons transferred, four hydrogen ions are translocated across the cytoplasmic membrane), and thus conserves the redox energy in a proton gradient. In Thiobacillus denitrificans (strain ATCC 25259 / T1), this protein is NADH-quinone oxidoreductase subunit K.